The following is a 359-amino-acid chain: Molybdenum import ATP-binding protein ModC (359 aa).

Residues 1–233 enclose the ABC transporter domain; that stretch reads MSGLTVSIRG…IDAESEGGGV (233 aa). Residue 32-39 coordinates ATP; it reads GHSGAGKT. Positions 289–355 constitute a Mop domain; sequence AISIRNLLPV…VKAVSVDRAA (67 aa).

The protein belongs to the ABC transporter superfamily. Molybdate importer (TC 3.A.1.8) family. As to quaternary structure, the complex is composed of two ATP-binding proteins (ModC), two transmembrane proteins (ModB) and a solute-binding protein (ModA).

The protein localises to the cell inner membrane. The catalysed reaction is molybdate(out) + ATP + H2O = molybdate(in) + ADP + phosphate + H(+). In terms of biological role, part of the ABC transporter complex ModABC involved in molybdenum import. Responsible for energy coupling to the transport system. This is Molybdenum import ATP-binding protein ModC from Brucella abortus (strain 2308).